The chain runs to 396 residues: MGANTSRKPPVFDENEDVNFDHFEILRAIGKGSFGKVCIVQKNDTKKMYAMKYMNKQKCVERNEVRNVFKELQIMQGLEHPFLVNLWYSFQDEEDMFMVVDLLLGGDLRYHLQQNVHFKEETVKLFICELVMALDYLQNQRIIHRDMKPDNILLDEHGHVHITDFNIAAMLPRETQITTMAGTKPYMAPEMFSSRKGAGYSFAVDWWSLGVTAYELLRGRRPYHIRSSTSSKEIVHTFETTVVTYPSAWSQEMVSLLKKLLEPNPDQRFSQLSDVQNFPYMNDINWDAVFQKRLIPGFIPNKGRLNCDPTFELEEMILESKPLHKKKKRLAKKEKDMRKCDSSQTCLLQEHLDSVQKEFIIFNREKVNRDFNKRQPNLALEQTKDPQGEDGQNNNL.

Gly-2 carries N-myristoyl glycine lipidation. One can recognise a Protein kinase domain in the interval 23–281 (FEILRAIGKG…LSDVQNFPYM (259 aa)). ATP-binding positions include 29–37 (IGKGSFGKV) and Lys-52. Asp-146 serves as the catalytic Proton acceptor. The segment at 373–396 (KRQPNLALEQTKDPQGEDGQNNNL) is disordered.

It belongs to the protein kinase superfamily. Ser/Thr protein kinase family. Mg(2+) serves as cofactor.

It is found in the cell membrane. It carries out the reaction L-seryl-[protein] + ATP = O-phospho-L-seryl-[protein] + ADP + H(+). The catalysed reaction is L-threonyl-[protein] + ATP = O-phospho-L-threonyl-[protein] + ADP + H(+). The protein is Serine/threonine-protein kinase 32A (STK32A) of Homo sapiens (Human).